A 580-amino-acid polypeptide reads, in one-letter code: Serine/threonine-protein kinase PINK1, mitochondrial (580 aa).

Residues 1-77 (MAVRQALGRG…RFFRQSVAGL (77 aa)) constitute a mitochondrion transit peptide. Topologically, residues 78–93 (AARIQRQFMVRARGGA) are mitochondrial intermembrane. Residues 94–110 (GPCGRAVFLAFGLGLGL) form a helical membrane-spanning segment. The tract at residues 111–117 (IEEKQAE) is required for outer membrane localization. Residues 111-580 (IEEKQAEGRR…LLLSSWRAAP (470 aa)) are Cytoplasmic-facing. The Protein kinase domain maps to 156 to 510 (YLIGQAIGKG…LAANVLHLSL (355 aa)). Residues 162 to 170 (IGKGCNAAV) and Lys-186 contribute to the ATP site. Phosphoserine; by autocatalysis is present on Ser-227. Asp-361 functions as the Proton acceptor in the catalytic mechanism. Ser-401 carries the phosphoserine; by autocatalysis modification.

The protein belongs to the protein kinase superfamily. Ser/Thr protein kinase family. Upon mitochondrial depolarization, it forms a supercomplex with TOM and TIM23 complexes. PINK1-TOM-TIM23 supercomplex formation requires PINK1 interaction with TOMM20 and TOMM70 and is critical for PINK1 stabilization at the outer mitochondrial membrane, kinase activation and downstream mitophagy. Upon mitochondrial depolarization, interacts with TIMM23; the interaction is required for PINK1 accumulation at the outer mitochondrial membrane, kinase activation by autophosphorylation and PRKN recruitement to mitochondria. Interacts with PRKN. Interacts with FBXO7. Forms a complex with PRKN and PARK7. Interacts with NENF. Requires Mg(2+) as cofactor. Post-translationally, proteolytically cleaved. In healthy cells, the precursor is continuously imported into the inner mitochondrial membrane (IMM), where it is proteolytically cleaved by mitochondrial-processing peptidase (MPP) and then undergoes further proteolytic cleavage by PARL or AFG3L2 to give rise to the 52 kDa short form. The 52 kDa short form is then released into the cytosol where it rapidly undergoes proteasome-dependent degradation. In unhealthy cells, when cellular stress conditions lead to the loss of mitochondrial membrane potential, mitochondrial import is impaired leading to the precursor accumulating on the outer mitochondrial membrane (OMM). If accumulation at the OMM fails and it is imported into the depolarized mitochondria, it undergoes cleavage by the IMM protease OMA1, promoting its subsequent degradation by the proteasome. Autophosphorylated. Loss of mitochondrial membrane potential results in the precursor accumulating on the outer mitochondrial membrane (OMM) where it is activated by autophosphorylation. Autophosphorylation at Ser-227 and Ser-401 is essential for selective recruitment of PRKN to depolarized mitochondria, via PINK1-dependent phosphorylation of ubiquitin and PRKN. As to expression, high levels expressed in testis, lower levels in brain, heart, lung, liver and kidney.

It localises to the mitochondrion outer membrane. Its subcellular location is the mitochondrion inner membrane. The protein resides in the cytoplasm. It is found in the cytosol. It catalyses the reaction L-seryl-[protein] + ATP = O-phospho-L-seryl-[protein] + ADP + H(+). The enzyme catalyses L-threonyl-[protein] + ATP = O-phospho-L-threonyl-[protein] + ADP + H(+). Its function is as follows. Serine/threonine-protein kinase which acts as a sensor of mitochondrial damage and protects against mitochondrial dysfunction during cellular stress. It phosphorylates mitochondrial proteins to coordinate mitochondrial quality control mechanisms that remove and replace dysfunctional mitochondrial components. Depending on the severity of mitochondrial damage, activity ranges from preventing apoptosis and stimulating mitochondrial biogenesis to eliminating severely damaged mitochondria via PINK1-PRKN-dependent mitophagy. When cellular stress results in irreversible mitochondrial damage, PINK1 accumulates at the outer mitochondrial membrane (OMM) where it phosphorylates pre-existing polyubiquitin chains at 'Ser-65', recruits PRKN from the cytosol to the OMM and activates PRKN by phosphorylation at 'Ser-65'. Activated PRKN then ubiquinates VDAC1 and other OMM proteins to initiate mitophagy. The PINK1-PRKN pathway also promotes fission of damaged mitochondria by phosphorylating and thus promoting the PRKN-dependent degradation of mitochondrial proteins involved in fission such as MFN2. This prevents the refusion of unhealthy mitochondria with the mitochondrial network or initiates mitochondrial fragmentation facilitating their later engulfment by autophagosomes. Also promotes mitochondrial fission independently of PRKN and ATG7-mediated mitophagy, via the phosphorylation and activation of DNM1L. Regulates motility of damaged mitochondria by promoting the ubiquitination and subsequent degradation of MIRO1 and MIRO2; in motor neurons, this likely inhibits mitochondrial intracellular anterograde transport along the axons which probably increases the chance of the mitochondria undergoing mitophagy in the soma. Required for ubiquinone reduction by mitochondrial complex I by mediating phosphorylation of complex I subunit NDUFA10. Phosphorylates LETM1, positively regulating its mitochondrial calcium transport activity. The polypeptide is Serine/threonine-protein kinase PINK1, mitochondrial (Pink1) (Mus musculus (Mouse)).